A 122-amino-acid chain; its full sequence is Large ribosomal subunit protein bL12 (122 aa).

This sequence belongs to the bacterial ribosomal protein bL12 family. In terms of assembly, homodimer. Part of the ribosomal stalk of the 50S ribosomal subunit. Forms a multimeric L10(L12)X complex, where L10 forms an elongated spine to which 2 to 4 L12 dimers bind in a sequential fashion. Binds GTP-bound translation factors.

Forms part of the ribosomal stalk which helps the ribosome interact with GTP-bound translation factors. Is thus essential for accurate translation. The sequence is that of Large ribosomal subunit protein bL12 from Sulfurimonas denitrificans (strain ATCC 33889 / DSM 1251) (Thiomicrospira denitrificans (strain ATCC 33889 / DSM 1251)).